A 170-amino-acid polypeptide reads, in one-letter code: Macro domain-containing protein VPA0103 (170 aa).

In terms of domain architecture, Macro spans 1–170 (MNAISLVQGD…SIWQHALTQH (170 aa)).

It belongs to the MacroD-type family.

The protein is Macro domain-containing protein VPA0103 of Vibrio parahaemolyticus serotype O3:K6 (strain RIMD 2210633).